Here is a 384-residue protein sequence, read N- to C-terminus: Galactokinase (384 aa).

34–37 (EHTD) provides a ligand contact to substrate. Residue 123–129 (SSGLSSS) coordinates ATP. S129 and E161 together coordinate Mg(2+). The active-site Proton acceptor is the D173. Substrate is bound at residue Y222.

This sequence belongs to the GHMP kinase family. GalK subfamily.

The protein resides in the cytoplasm. It carries out the reaction alpha-D-galactose + ATP = alpha-D-galactose 1-phosphate + ADP + H(+). It participates in carbohydrate metabolism; galactose metabolism. Catalyzes the transfer of the gamma-phosphate of ATP to D-galactose to form alpha-D-galactose-1-phosphate (Gal-1-P). The protein is Galactokinase of Haemophilus influenzae (strain PittEE).